The chain runs to 338 residues: tRNA N6-adenosine threonylcarbamoyltransferase (338 aa).

H111 and H115 together coordinate Fe cation. Substrate is bound by residues 134 to 138 (LVSGG), D167, G180, and N272. D300 contributes to the Fe cation binding site.

This sequence belongs to the KAE1 / TsaD family. Fe(2+) is required as a cofactor.

The protein resides in the cytoplasm. It catalyses the reaction L-threonylcarbamoyladenylate + adenosine(37) in tRNA = N(6)-L-threonylcarbamoyladenosine(37) in tRNA + AMP + H(+). In terms of biological role, required for the formation of a threonylcarbamoyl group on adenosine at position 37 (t(6)A37) in tRNAs that read codons beginning with adenine. Is involved in the transfer of the threonylcarbamoyl moiety of threonylcarbamoyl-AMP (TC-AMP) to the N6 group of A37, together with TsaE and TsaB. TsaD likely plays a direct catalytic role in this reaction. The sequence is that of tRNA N6-adenosine threonylcarbamoyltransferase from Shewanella denitrificans (strain OS217 / ATCC BAA-1090 / DSM 15013).